The primary structure comprises 265 residues: Large ribosomal subunit protein bL9m (265 aa).

A mitochondrion-targeting transit peptide spans 1–49 (MAASVAPGVRTLWWAGAAWLRQGGIRELFRPRIEGSTPGRDFSLSHYQS).

It belongs to the bacterial ribosomal protein bL9 family. As to quaternary structure, component of the mitochondrial ribosome large subunit (39S) which comprises a 16S rRNA and about 50 distinct proteins.

It localises to the mitochondrion. The protein is Large ribosomal subunit protein bL9m (Mrpl9) of Mus musculus (Mouse).